The sequence spans 842 residues: G-type lectin S-receptor-like serine/threonine-protein kinase At1g11330 (842 aa).

An N-terminal signal peptide occupies residues Met-1 to Gly-29. Residues Glu-30–Asn-444 are Extracellular-facing. The region spanning Arg-32–Ser-157 is the Bulb-type lectin domain. N-linked (GlcNAc...) asparagine glycosylation is found at Asn-63, Asn-94, Asn-122, Asn-130, Asn-196, and Asn-260. The 37-residue stretch at Pro-294–Thr-330 folds into the EGF-like; atypical domain. 2 cysteine pairs are disulfide-bonded: Cys-298–Cys-310 and Cys-304–Cys-318. N-linked (GlcNAc...) asparagine glycosylation is found at Asn-328, Asn-336, Asn-354, and Asn-396. The PAN domain maps to Cys-349–Ala-435. 2 disulfides stabilise this stretch: Cys-389–Cys-410 and Cys-393–Cys-399. A helical transmembrane segment spans residues Leu-445 to Leu-465. Over Leu-466–Arg-842 the chain is Cytoplasmic. Residues Phe-524 to Phe-810 enclose the Protein kinase domain. ATP is bound by residues Leu-530 to Val-538 and Lys-552. 2 positions are modified to phosphoserine: Ser-558 and Ser-573. Positions Met-613–Ile-630 are caM-binding. Asp-649 (proton acceptor) is an active-site residue. A phosphoserine mark is found at Ser-653 and Ser-666. Thr-683 carries the post-translational modification Phosphothreonine. A phosphoserine mark is found at Ser-726, Ser-727, Ser-821, and Ser-830. A disordered region spans residues Arg-814 to Arg-842. The span at Glu-818–Gln-827 shows a compositional bias: low complexity. Polar residues predominate over residues Lys-828–Arg-842. Thr-837 is subject to Phosphothreonine.

This sequence belongs to the protein kinase superfamily. Ser/Thr protein kinase family.

The protein localises to the cell membrane. It catalyses the reaction L-seryl-[protein] + ATP = O-phospho-L-seryl-[protein] + ADP + H(+). It carries out the reaction L-threonyl-[protein] + ATP = O-phospho-L-threonyl-[protein] + ADP + H(+). This chain is G-type lectin S-receptor-like serine/threonine-protein kinase At1g11330, found in Arabidopsis thaliana (Mouse-ear cress).